The following is a 483-amino-acid chain: Protein nucleotidyltransferase YdiU (483 aa).

8 residues coordinate ATP: Gly-87, Gly-89, Arg-90, Lys-110, Asp-122, Gly-123, Arg-173, and Arg-180. The Proton acceptor role is filled by Asp-249. Residues Asn-250 and Asp-259 each coordinate Mg(2+). Residue Asp-259 coordinates ATP.

This sequence belongs to the SELO family. Requires Mg(2+) as cofactor. It depends on Mn(2+) as a cofactor.

The catalysed reaction is L-seryl-[protein] + ATP = 3-O-(5'-adenylyl)-L-seryl-[protein] + diphosphate. The enzyme catalyses L-threonyl-[protein] + ATP = 3-O-(5'-adenylyl)-L-threonyl-[protein] + diphosphate. It carries out the reaction L-tyrosyl-[protein] + ATP = O-(5'-adenylyl)-L-tyrosyl-[protein] + diphosphate. It catalyses the reaction L-histidyl-[protein] + UTP = N(tele)-(5'-uridylyl)-L-histidyl-[protein] + diphosphate. The catalysed reaction is L-seryl-[protein] + UTP = O-(5'-uridylyl)-L-seryl-[protein] + diphosphate. The enzyme catalyses L-tyrosyl-[protein] + UTP = O-(5'-uridylyl)-L-tyrosyl-[protein] + diphosphate. Its function is as follows. Nucleotidyltransferase involved in the post-translational modification of proteins. It can catalyze the addition of adenosine monophosphate (AMP) or uridine monophosphate (UMP) to a protein, resulting in modifications known as AMPylation and UMPylation. The protein is Protein nucleotidyltransferase YdiU of Pectobacterium carotovorum subsp. carotovorum (strain PC1).